We begin with the raw amino-acid sequence, 205 residues long: Protein N-terminal glutamine amidohydrolase (205 aa).

Residues Cys20, His74, and Asp90 contribute to the active site.

The protein belongs to the NTAQ1 family. Monomer.

The catalysed reaction is N-terminal L-glutaminyl-[protein] + H2O = N-terminal L-glutamyl-[protein] + NH4(+). In terms of biological role, mediates the side-chain deamidation of N-terminal glutamine residues to glutamate, an important step in N-end rule pathway of protein degradation. Conversion of the resulting N-terminal glutamine to glutamate renders the protein susceptible to arginylation, polyubiquitination and degradation as specified by the N-end rule. Does not act on substrates with internal or C-terminal glutamine and does not act on non-glutamine residues in any position. The chain is Protein N-terminal glutamine amidohydrolase (tun) from Drosophila erecta (Fruit fly).